We begin with the raw amino-acid sequence, 182 residues long: Ribosome maturation factor RimM (182 aa).

The region spanning 103 to 182 (VGDYYWKDLI…TIEVDWDPGF (80 aa)) is the PRC barrel domain.

It belongs to the RimM family. Binds ribosomal protein uS19.

Its subcellular location is the cytoplasm. An accessory protein needed during the final step in the assembly of 30S ribosomal subunit, possibly for assembly of the head region. Essential for efficient processing of 16S rRNA. May be needed both before and after RbfA during the maturation of 16S rRNA. It has affinity for free ribosomal 30S subunits but not for 70S ribosomes. The protein is Ribosome maturation factor RimM of Pectobacterium atrosepticum (strain SCRI 1043 / ATCC BAA-672) (Erwinia carotovora subsp. atroseptica).